A 699-amino-acid polypeptide reads, in one-letter code: Epithelial sodium channel subunit alpha (699 aa).

Positions 1–71 (MLDHTRAPEL…EPRQPTEEEE (71 aa)) are disordered. The Cytoplasmic segment spans residues 1-110 (MLDHTRAPEL…CSKHNRMKTA (110 aa)). A helical transmembrane segment spans residues 111–131 (FWAVLWLCTFGMMYWQFALLF). Residues 132–589 (EEYFSYPVSL…SQWSLWFGSS (458 aa)) are Extracellular-facing. 10 cysteine pairs are disulfide-bonded: Cys-158–Cys-332, Cys-256–Cys-263, Cys-309–Cys-316, Cys-421–Cys-506, Cys-443–Cys-483, Cys-443–Cys-502, Cys-447–Cys-498, Cys-456–Cys-483, Cys-456–Cys-506, and Cys-458–Cys-472. The interval 200-270 (RRRSTRDLRG…SDCFYQTYSS (71 aa)) is gating release of inhibition by proteolysis (GRIP); protease-sensitive region that is responsible for the proteolytic activation of the channel. A disordered region spans residues 211 to 244 (LPHPLQRLRTPPPPNPARSARSASSSVRDNNPQV). Residues 227 to 238 (ARSARSASSSVR) show a composition bias toward low complexity. The helical transmembrane segment at 590–610 (VLSVVEMAELIFDLLVITLIM) threads the bilayer. Residues 611–699 (LLHRFRSRYW…SSACAPAMAL (89 aa)) lie on the Cytoplasmic side of the membrane. Positions 637 to 699 (ASSFPSRFCP…SSACAPAMAL (63 aa)) are disordered. Positions 656-667 (PQQGTTPPLALT) are enriched in low complexity. The short motif at 669 to 673 (PPPAY) is the PY motif; recruits WW domain-containing proteins and is thereby required for ubiquitination and inhibition of the channel by NEDD4 and NEDD4L element.

Belongs to the amiloride-sensitive sodium channel (TC 1.A.6) family. SCNN1A subfamily. As to quaternary structure, heterotrimer; containing an alpha/SCNN1A, a beta/SCNN1B and a gamma/SCNN1G subunit. Interacts with WWP1 (via WW domains). Interacts with WWP2 (via WW domains); inhibits the channel. Interacts with BPIFA1; the interaction is indirect via SCNN1B and inhibits the proteolytic processing of SCNN1A and SCNN1G and the activation of ENaC. Interacts with the full-length immature form of PCSK9 (pro-PCSK9). In terms of processing, ubiquitinated. Can be ubiquitinated at multiple sites and undergo monoubiquitination and polyubiquitination. Ubiquitination by NEDD4 or NEDD4L inhibits the ENaC channel through endocytosis, intracellular retention and degradation of its individual subunits. Post-translationally, ENaC is activated through the proteolytic maturation of its subunits. Furin cleaves the SCNN1A subunit, which results in a stepwise increase in the open probability of the channel due to the release of an inhibitory tract. BPIFA1, which is recruited by the SCNN1B subunit, prevents the proteolytic activation of ENaC. N-glycosylated. In terms of tissue distribution, expressed in kidney (at protein level). Expressed in lung (at protein level). Expressed in the epididymis (at protein level). In the caput and corpus regions of the epididymis, expressed uniformly on the luminal and basal surfaces of the ducts and in the sperm in the duct lumen. Also expressed in distal colon and, at low levels, in liver.

The protein resides in the apical cell membrane. It is found in the cell projection. The protein localises to the cilium. Its subcellular location is the cytoplasmic granule. It localises to the cytoplasm. The protein resides in the cytoplasmic vesicle. It is found in the secretory vesicle. The protein localises to the acrosome. Its subcellular location is the flagellum. It carries out the reaction Na(+)(in) = Na(+)(out). Its activity is regulated as follows. Originally identified and characterized by its inhibition by the diuretic drug amiloride. Its function is as follows. This is one of the three pore-forming subunits of the heterotrimeric epithelial sodium channel (ENaC), a critical regulator of sodium balance and fluid homeostasis. ENaC operates in epithelial tissues, where it mediates the electrodiffusion of sodium ions from extracellular fluid through the apical membrane of cells, with water following osmotically. It plays a key role in maintaining sodium homeostasis through electrogenic sodium reabsorption in the kidneys. Additionally, ENaC is essential for airway surface liquid homeostasis, which is crucial for proper mucus clearance. This chain is Epithelial sodium channel subunit alpha, found in Mus musculus (Mouse).